The primary structure comprises 427 residues: Adenylosuccinate synthetase (427 aa).

Residues 12-18 (GDEGKGK) and 40-42 (GHT) contribute to the GTP site. Catalysis depends on aspartate 13, which acts as the Proton acceptor. The Mg(2+) site is built by aspartate 13 and glycine 40. Residues 13–16 (DEGK), 38–41 (NAGH), threonine 128, arginine 142, glutamine 223, threonine 238, and arginine 302 contribute to the IMP site. The Proton donor role is filled by histidine 41. 298–304 (TTTGRPR) lines the substrate pocket. Residues arginine 304, 330–332 (KLD), and 412–414 (AVG) each bind GTP.

Belongs to the adenylosuccinate synthetase family. In terms of assembly, homodimer. Mg(2+) is required as a cofactor.

The protein localises to the cytoplasm. The catalysed reaction is IMP + L-aspartate + GTP = N(6)-(1,2-dicarboxyethyl)-AMP + GDP + phosphate + 2 H(+). Its pathway is purine metabolism; AMP biosynthesis via de novo pathway; AMP from IMP: step 1/2. Plays an important role in the de novo pathway of purine nucleotide biosynthesis. Catalyzes the first committed step in the biosynthesis of AMP from IMP. The chain is Adenylosuccinate synthetase from Moorella thermoacetica (strain ATCC 39073 / JCM 9320).